Reading from the N-terminus, the 569-residue chain is Probable ABC transporter permease protein y4fN (569 aa).

13 helical membrane passes run 10–30 (VFYW…LLVP), 68–88 (VWMT…QVAV), 98–118 (GFLK…AAAG), 121–141 (FTYG…PSLP), 145–165 (FIGW…FHFL), 196–216 (VVLP…LITA), 247–267 (PDMA…LILL), 304–324 (LAYL…LFSF), 363–383 (MSSI…PIMV), 395–415 (ICFV…LIVA), 426–446 (LVLL…SLPL), 480–500 (VVLP…FNNL), and 534–554 (AAVS…VILI). Positions 64–268 (LWNTVWMTAA…LVLMGLILLS (205 aa)) constitute an ABC transmembrane type-1 1 domain. Residues 357–551 (FFNSMLMSSI…TLIMAFSLAV (195 aa)) form the ABC transmembrane type-1 2 domain.

It belongs to the binding-protein-dependent transport system permease family. CysTW subfamily.

Its subcellular location is the cell inner membrane. Functionally, probably part of the binding-protein-dependent transport system y4fNOP. Probably responsible for the translocation of the substrate across the membrane. The chain is Probable ABC transporter permease protein y4fN from Sinorhizobium fredii (strain NBRC 101917 / NGR234).